The sequence spans 384 residues: 8-amino-7-oxononanoate synthase (384 aa).

Arg-21 is a substrate binding site. A pyridoxal 5'-phosphate-binding site is contributed by 108-109; that stretch reads GF. His-133 provides a ligand contact to substrate. Residues Ser-179, His-207, and Thr-233 each coordinate pyridoxal 5'-phosphate. Lys-236 is subject to N6-(pyridoxal phosphate)lysine. A substrate-binding site is contributed by Thr-352.

It belongs to the class-II pyridoxal-phosphate-dependent aminotransferase family. BioF subfamily. Homodimer. The cofactor is pyridoxal 5'-phosphate.

It carries out the reaction 6-carboxyhexanoyl-[ACP] + L-alanine + H(+) = (8S)-8-amino-7-oxononanoate + holo-[ACP] + CO2. The protein operates within cofactor biosynthesis; biotin biosynthesis. Functionally, catalyzes the decarboxylative condensation of pimeloyl-[acyl-carrier protein] and L-alanine to produce 8-amino-7-oxononanoate (AON), [acyl-carrier protein], and carbon dioxide. The chain is 8-amino-7-oxononanoate synthase from Escherichia coli O17:K52:H18 (strain UMN026 / ExPEC).